The following is a 335-amino-acid chain: Tetraacyldisaccharide 4'-kinase (335 aa).

58-65 (TVGGSGKT) is an ATP binding site.

Belongs to the LpxK family.

The catalysed reaction is a lipid A disaccharide + ATP = a lipid IVA + ADP + H(+). It participates in glycolipid biosynthesis; lipid IV(A) biosynthesis; lipid IV(A) from (3R)-3-hydroxytetradecanoyl-[acyl-carrier-protein] and UDP-N-acetyl-alpha-D-glucosamine: step 6/6. Its function is as follows. Transfers the gamma-phosphate of ATP to the 4'-position of a tetraacyldisaccharide 1-phosphate intermediate (termed DS-1-P) to form tetraacyldisaccharide 1,4'-bis-phosphate (lipid IVA). In Shewanella sp. (strain ANA-3), this protein is Tetraacyldisaccharide 4'-kinase.